The following is an 887-amino-acid chain: Pyruvate dehydrogenase E1 component (887 aa).

As to quaternary structure, homodimer. Part of the PDH complex, consisting of multiple copies of pyruvate dehydrogenase (E1), dihydrolipoamide acetyltransferase (E2) and lipoamide dehydrogenase (E3). Thiamine diphosphate is required as a cofactor.

The enzyme catalyses N(6)-[(R)-lipoyl]-L-lysyl-[protein] + pyruvate + H(+) = N(6)-[(R)-S(8)-acetyldihydrolipoyl]-L-lysyl-[protein] + CO2. Component of the pyruvate dehydrogenase (PDH) complex, that catalyzes the overall conversion of pyruvate to acetyl-CoA and CO(2). This chain is Pyruvate dehydrogenase E1 component (aceE), found in Buchnera aphidicola subsp. Baizongia pistaciae (strain Bp).